We begin with the raw amino-acid sequence, 213 residues long: Proton-translocating ferredoxin:NAD(+) oxidoreductase complex subunit E (213 aa).

6 helical membrane passes run 11–31 (GLIA…ALAT), 39–59 (FTMG…VSII), 69–89 (VPVY…VMQA), 93–113 (LLYK…IILA), 128–148 (FFDG…IGMI), and 170–190 (ALIM…VAIV).

Belongs to the NqrDE/RnfAE family. As to quaternary structure, the complex is composed of six subunits: RnfA, RnfB, RnfC, RnfD, RnfE and RnfG.

The protein localises to the cell membrane. Its function is as follows. Part of a membrane-bound complex that couples electron transfer with translocation of ions across the membrane. Couples electron transfer from reduced ferredoxin to NAD(+) with translocation of H(+) out of the cell. Essential for energy conservation during autotrophic growth. Contributes to ATP synthesis during heterotrophic growth. This Clostridium ljungdahlii (strain ATCC 55383 / DSM 13528 / PETC) protein is Proton-translocating ferredoxin:NAD(+) oxidoreductase complex subunit E.